The following is a 689-amino-acid chain: Protein SDA1 homolog (689 aa).

Disordered regions lie at residues 227–260 (DEKK…TKNK), 485–512 (EQEK…DGEW), and 623–689 (TDRK…RLMK). The stretch at 258–319 (KNKKKLDKAM…RFEVKLMHMD (62 aa)) forms a coiled coil. Positions 492-512 (PEEDDGWESASLSDDDEDGEW) are enriched in acidic residues. Positions 670-681 (RDKQIALRDSLL) are enriched in basic and acidic residues.

Belongs to the SDA1 family.

It is found in the nucleus. Its subcellular location is the nucleolus. Functionally, required for 60S pre-ribosomal subunits export to the cytoplasm. The sequence is that of Protein SDA1 homolog (sdad1) from Xenopus laevis (African clawed frog).